The chain runs to 224 residues: UPF0758 protein VSAL_I0192 (224 aa).

An MPN domain is found at Ala-102–Ile-224. 3 residues coordinate Zn(2+): His-173, His-175, and Asp-186. A JAMM motif motif is present at residues His-173–Asp-186.

The protein belongs to the UPF0758 family.

The polypeptide is UPF0758 protein VSAL_I0192 (Aliivibrio salmonicida (strain LFI1238) (Vibrio salmonicida (strain LFI1238))).